The chain runs to 306 residues: Ribose-5-phosphate isomerase (306 aa).

Residues 45-68 are disordered; that stretch reads GRAQFGVGSTSTSSGDANSVCPAP. Over residues 51-61 the composition is skewed to polar residues; the sequence is VGSTSTSSGDA. Serine 102 is subject to Phosphoserine.

Belongs to the ribose 5-phosphate isomerase family.

It carries out the reaction aldehydo-D-ribose 5-phosphate = D-ribulose 5-phosphate. The protein operates within carbohydrate degradation; pentose phosphate pathway; D-ribose 5-phosphate from D-ribulose 5-phosphate (non-oxidative stage): step 1/1. This Sus scrofa (Pig) protein is Ribose-5-phosphate isomerase.